An 817-amino-acid chain; its full sequence is Anaphase-promoting complex subunit 4 (817 aa).

At Tyr-469 the chain carries Phosphotyrosine. A phosphoserine mark is found at Ser-757 and Ser-758. Lys-772 is covalently cross-linked (Glycyl lysine isopeptide (Lys-Gly) (interchain with G-Cter in SUMO2)). Phosphoserine occurs at positions 777 and 779. Lys-798 is covalently cross-linked (Glycyl lysine isopeptide (Lys-Gly) (interchain with G-Cter in SUMO2)).

It belongs to the APC4 family. As to quaternary structure, the mammalian APC/C is composed at least of 14 distinct subunits ANAPC1, ANAPC2, CDC27/APC3, ANAPC4, ANAPC5, CDC16/APC6, ANAPC7, CDC23/APC8, ANAPC10, ANAPC11, CDC26/APC12, ANAPC13, ANAPC15 and ANAPC16 that assemble into a complex of at least 19 chains with a combined molecular mass of around 1.2 MDa; APC/C interacts with FZR1 and FBXO5. In the context of the APC/C complex, directly interacts with UBE2S.

The protein resides in the nucleus. It participates in protein modification; protein ubiquitination. In terms of biological role, component of the anaphase promoting complex/cyclosome (APC/C), a cell cycle-regulated E3 ubiquitin ligase that controls progression through mitosis and the G1 phase of the cell cycle. The APC/C complex acts by mediating ubiquitination and subsequent degradation of target proteins: it mainly mediates the formation of 'Lys-11'-linked polyubiquitin chains and, to a lower extent, the formation of 'Lys-48'- and 'Lys-63'-linked polyubiquitin chains. The APC/C complex catalyzes assembly of branched 'Lys-11'-/'Lys-48'-linked branched ubiquitin chains on target proteins. The polypeptide is Anaphase-promoting complex subunit 4 (ANAPC4) (Pongo abelii (Sumatran orangutan)).